Here is an 891-residue protein sequence, read N- to C-terminus: Major core protein 4a precursor (891 aa).

It belongs to the poxviridae protein P4a family. In terms of assembly, interacts with P39/A4.

It localises to the virion. In terms of biological role, core protein 4a is the most abundant virion protein. Major component of the virion core that undergoes proteolytic processing during the immature virion (IV) to mature virion (MV) transition. The sequence is that of Major core protein 4a precursor from Fowlpox virus (strain NVSL) (FPV).